Here is a 384-residue protein sequence, read N- to C-terminus: Proteinase K (384 aa).

Positions 1-15 (MRLSVLLSLLPLALG) are cleaved as a signal peptide. The propeptide occupies 16-105 (APAVEQRSEA…IEQDAVVTIN (90 aa)). Residues 39–104 (KYIVKFKEGS…YIEQDAVVTI (66 aa)) form the Inhibitor I9 domain. The Peptidase S8 domain maps to 112-384 (PWGLARISST…NLLAYNNYQA (273 aa)). Threonine 121 serves as a coordination point for Ca(2+). Cysteines 139 and 228 form a disulfide. Catalysis depends on charge relay system residues aspartate 144 and histidine 174. The Ca(2+) site is built by proline 280, valine 282, and aspartate 305. Cysteines 283 and 354 form a disulfide. Serine 329 serves as the catalytic Charge relay system. Aspartate 365 contributes to the Ca(2+) binding site.

Belongs to the peptidase S8 family. Ca(2+) serves as cofactor.

The enzyme catalyses Hydrolysis of keratin, and of other proteins with subtilisin-like specificity. Hydrolyzes peptide amides.. In terms of biological role, hydrolyzes keratin at aromatic and hydrophobic residues. The polypeptide is Proteinase K (PROK) (Parengyodontium album (Tritirachium album)).